The sequence spans 359 residues: 3-dehydroquinate synthase (359 aa).

NAD(+) is bound by residues 69 to 74 (DGEKYK), 103 to 107 (GVVGD), 127 to 128 (TT), K140, K149, and 167 to 170 (TLDT). Zn(2+) contacts are provided by E182, H245, and H262.

Belongs to the sugar phosphate cyclases superfamily. Dehydroquinate synthase family. Co(2+) is required as a cofactor. The cofactor is Zn(2+). NAD(+) serves as cofactor.

The protein localises to the cytoplasm. It carries out the reaction 7-phospho-2-dehydro-3-deoxy-D-arabino-heptonate = 3-dehydroquinate + phosphate. Its pathway is metabolic intermediate biosynthesis; chorismate biosynthesis; chorismate from D-erythrose 4-phosphate and phosphoenolpyruvate: step 2/7. In terms of biological role, catalyzes the conversion of 3-deoxy-D-arabino-heptulosonate 7-phosphate (DAHP) to dehydroquinate (DHQ). In Ruthia magnifica subsp. Calyptogena magnifica, this protein is 3-dehydroquinate synthase.